A 122-amino-acid polypeptide reads, in one-letter code: Basic phospholipase A2 F15 (122 aa).

Intrachain disulfides connect cysteine 26–cysteine 115, cysteine 28–cysteine 44, cysteine 43–cysteine 95, cysteine 49–cysteine 122, cysteine 50–cysteine 88, cysteine 57–cysteine 81, and cysteine 75–cysteine 86. Positions 27, 29, and 31 each coordinate Ca(2+). Histidine 47 is a catalytic residue. Position 48 (aspartate 48) interacts with Ca(2+). Aspartate 89 is an active-site residue.

This sequence belongs to the phospholipase A2 family. Group II subfamily. D49 sub-subfamily. In terms of assembly, when this protein is associated with crotapotin (F5 or F7), it forms the crotoxin protein. Ca(2+) is required as a cofactor. In terms of tissue distribution, expressed by the venom gland.

The protein resides in the secreted. The catalysed reaction is a 1,2-diacyl-sn-glycero-3-phosphocholine + H2O = a 1-acyl-sn-glycero-3-phosphocholine + a fatty acid + H(+). Its activity is regulated as follows. Activated by heparin. Inhibited by its chaperone crotapotin. Snake venom phospholipase A2 (PLA2) that shows moderate neurotoxic activity in isolated mouse phrenic nerve diaphragm but shows high neurotoxic activity in a chick biventer cervis preparation. Also shows a high bactericidal effect against both Gram-negative and Gram-positive bacteria. PLA2 catalyzes the calcium-dependent hydrolysis of the 2-acyl groups in 3-sn-phosphoglycerides. The protein is Basic phospholipase A2 F15 of Crotalus durissus terrificus (South American rattlesnake).